A 122-amino-acid chain; its full sequence is Basic phospholipase A2 Ts-G6D49 (122 aa).

Cystine bridges form between cysteine 26–cysteine 115, cysteine 28–cysteine 44, cysteine 43–cysteine 95, cysteine 49–cysteine 122, cysteine 50–cysteine 88, cysteine 57–cysteine 81, and cysteine 75–cysteine 86. Tyrosine 27, glycine 29, and glycine 31 together coordinate Ca(2+). Histidine 47 is an active-site residue. Residue aspartate 48 coordinates Ca(2+). The active site involves aspartate 89.

Requires Ca(2+) as cofactor. In terms of tissue distribution, expressed by the venom gland.

The protein localises to the secreted. The catalysed reaction is a 1,2-diacyl-sn-glycero-3-phosphocholine + H2O = a 1-acyl-sn-glycero-3-phosphocholine + a fatty acid + H(+). Functionally, snake venom phospholipase A2 that induces fast and sustaining local edema a few hours after injection (5-10 ug) in the hind paw, and prolongs the coagulation time of human plasma. Exhibits moderate hydrolytic activities and prefers the zwitterionic micelles (dPPC with Triton X-100) to the anionic micelles (dPPC with deoxycholate). PLA2 catalyzes the calcium-dependent hydrolysis of the 2-acyl groups in 3-sn-phosphoglycerides. The sequence is that of Basic phospholipase A2 Ts-G6D49 from Trimeresurus stejnegeri (Chinese green tree viper).